We begin with the raw amino-acid sequence, 147 residues long: METLTAISRWLAKQHVVTWCVQQEGELWCANAFYLFDAQKVAFYILTEEKTRHAQMSGPQAAVAGTVNGQPKTVALIRGVQFKGEIRRLEGEESERARQAYNRRFPVARMLSAPVWEIRLDEIKFTDNTLGFGKKMIWLRNSGTEQA.

Belongs to the UPF0306 family.

This chain is UPF0306 protein YhbP, found in Escherichia coli (strain SMS-3-5 / SECEC).